Reading from the N-terminus, the 441-residue chain is Ribosomal protein uS12 methylthiotransferase RimO (441 aa).

The MTTase N-terminal domain occupies 8-118 (PKIGFVSLGC…VLQHVHHYVP (111 aa)). Cys-17, Cys-53, Cys-82, Cys-150, Cys-154, and Cys-157 together coordinate [4Fe-4S] cluster. The region spanning 136–373 (LTPRHYAYLK…MALQQQISAE (238 aa)) is the Radical SAM core domain. A TRAM domain is found at 376 to 441 (QEKVGREILV…DEYDLWGSLV (66 aa)).

The protein belongs to the methylthiotransferase family. RimO subfamily. It depends on [4Fe-4S] cluster as a cofactor.

The protein localises to the cytoplasm. The catalysed reaction is L-aspartate(89)-[ribosomal protein uS12]-hydrogen + (sulfur carrier)-SH + AH2 + 2 S-adenosyl-L-methionine = 3-methylsulfanyl-L-aspartate(89)-[ribosomal protein uS12]-hydrogen + (sulfur carrier)-H + 5'-deoxyadenosine + L-methionine + A + S-adenosyl-L-homocysteine + 2 H(+). Catalyzes the methylthiolation of an aspartic acid residue of ribosomal protein uS12. The protein is Ribosomal protein uS12 methylthiotransferase RimO of Cronobacter sakazakii (strain ATCC BAA-894) (Enterobacter sakazakii).